Consider the following 267-residue polypeptide: Small ribosomal subunit protein uS2 (267 aa).

Residues 226–267 (AAAPNSASVREEEFSAESADEGKGRRAPAKKGEKKADAPAAE) are disordered. Basic and acidic residues predominate over residues 245-267 (DEGKGRRAPAKKGEKKADAPAAE).

It belongs to the universal ribosomal protein uS2 family.

This is Small ribosomal subunit protein uS2 from Xanthomonas oryzae pv. oryzae (strain MAFF 311018).